The sequence spans 257 residues: MNPLVIKLGGVLLESDDAMKRLFEALVDYQKFYKRHVSVIHGGGRLIDNLMNKLSLPVKKKNGLRITPSEHINIITGALAGTANKTLLAWALKYNINAIGLCLADGGSVDVERLDENLGHVGKAIPGSPLFLKKLFKEGTIPIISSIGITKDGLLMNVNADLAATALATTLQANLILLSDISSILDGKGQRITEIDSIQAEKLIMQGIITNGMIVKVRAALEAARVLRRPVDIASWQNTEKLKLLFNGVNIGTRVYV.

Substrate-binding positions include 43-44, Arg-65, and Asn-157; that span reads GG. ATP-binding positions include 180–185 and 208–210; these read DISSIL and IIT.

It belongs to the acetylglutamate kinase family. ArgB subfamily. In terms of assembly, homodimer.

The protein resides in the cytoplasm. It carries out the reaction N-acetyl-L-glutamate + ATP = N-acetyl-L-glutamyl 5-phosphate + ADP. Its pathway is amino-acid biosynthesis; L-arginine biosynthesis; N(2)-acetyl-L-ornithine from L-glutamate: step 2/4. Its function is as follows. Catalyzes the ATP-dependent phosphorylation of N-acetyl-L-glutamate. In Buchnera aphidicola subsp. Acyrthosiphon pisum (strain 5A), this protein is Acetylglutamate kinase.